A 283-amino-acid chain; its full sequence is NFU1 iron-sulfur cluster scaffold homolog, mitochondrial (283 aa).

A mitochondrion-targeting transit peptide spans 1–30 (MSKFLSQAALNTLRNTRLGSRQLVRSFAGI). Positions 182–250 (IKELLDTRIR…IPEVESVEQV (69 aa)) are nifU. 2 residues coordinate [4Fe-4S] cluster: Cys-219 and Cys-222.

The protein belongs to the NifU family.

It is found in the mitochondrion. Its function is as follows. Molecular scaffold for [Fe-S] cluster assembly of mitochondrial iron-sulfur proteins. In Drosophila erecta (Fruit fly), this protein is NFU1 iron-sulfur cluster scaffold homolog, mitochondrial.